A 1252-amino-acid chain; its full sequence is MVEAAPAGSGPLRRTFLVPEIKSLDQYDFSRAKAAASLAWVLRAAFGGAEHVPPELWEPFYTDQYAQEHVKPPVTRLLLSAELYCRAWRQALPQLEPSPSPSALLALLARRGTVPSLPEHPVREADLKHQPILMGAHLAVIDALMVAFSFEWTKTLPGPLALSSLEHKLLFWVDTTVRRLQEKTEQEAAQRASPAAPLDGASPAQPSIRYRKDRAIARRAPCFPNVTTLQDLASGAALAATIHCYCPQLLRLEEVCLKDPMSVADSLYNLQLVQDFCASHLPRGCPLSLEDLLYVPPPLKVNLVVLLAEMYMCFEVLKPDFVQAKDLPDGHAVSPRNTETVPSQNNSGSSSPVFNFRHPLLSPGGPQSPLRGSTGSLKSSPSMSHMEALGKAWNRQLSRPLSQAVSFSTPFGLDSDVDVVMGDPVLLRSVSSDSLGPPRPVSTSSRNSAQPAPESGDLPTIEEALQIIHSAEPRLLPDGAADGSFYLHSPEGLSKPPLSPYPPEGASKPLSDRLNKAPIYISHPENPSKSSPCSTGEILKPPPPSEGSPKAVASSPAANNSEVKMTSFAERKKQLVKAEAESGLGSPTSTPVAPEALSSEMSELGARLEEKRRAIEAQKRRIEAIFAKHRQRLGKSAFLQVQPREAAGEAEEEAELGSVPGGERPAGEGQGEPSLRHKSVTFSPDLGPVPPEGLGDYNRAVSKLSAALSSLQRDMQRLTDQQQRLLAPPEAPGPAPPPAAWVIPGPATGPKAASPSPARRAPAARRSPGPGPSPTPRSPKHARPAELKLAPLTRVLTPPHDVDSLPHLRKFSPSQVPVQTRSSILLSEGTPPEEPTTKPALIEIPLASLGEPAADEEGDGSPPGAEDSLEEEASSEGEPRSGLGFFYKDEDKPEDEMAQKRASLLERQQRRVEEARRRKQWQEAEKEQKREEAARLAQEAPGLAFTTPVVASAAPVATLAPTTRAMAPAEEEVGPRRGDFTRLEYERRAQLKLMDDLDKVLRPRASGTGGPGRGGRRATRPRSGCCDDSALARSPARGLLGSRLSKVYSQSTLSLSTVANEAPNNLGVKRPTSRAPSPSGLMSPSRLPGSRERDWENGSNASSPASVPEYTGPRLYKEPSAKSNKFIIHNALSHCCLAGKVNEPQKNRILEEIEKSKANHFLILFRDSSCQFRALYTLSGETEELSRLAGYGPRTVTPAMVEGIYKYNSDRKRFTQIPAKTMSMSVDAFTIQGHLWQSKKPTTPKKGGGTPK.

9 disordered regions span residues 183–205, 331–385, 429–457, 479–604, 638–697, 712–935, 962–981, 996–1030, and 1063–1114; these read KTEQ…SPAQ, HAVS…SMSH, SVSS…ESGD, GAAD…MSEL, FLQV…LGDY, QRDM…EAAR, TTRA…GDFT, DLDK…DDSA, and PNNL…TGPR. Thr184 carries the post-translational modification Phosphothreonine. Residue Ser193 is modified to Phosphoserine. Positions 203–312 constitute a Calponin-homology (CH) domain; it reads PAQPSIRYRK…LVVLLAEMYM (110 aa). Phosphoserine occurs at positions 334, 347, 351, 368, 373, and 382. Over residues 335-353 the composition is skewed to polar residues; sequence PRNTETVPSQNNSGSSSPV. Over residues 359-373 the composition is skewed to low complexity; sequence PLLSPGGPQSPLRGS. 3 stretches are compositionally biased toward polar residues: residues 374-383, 441-450, and 525-534; these read TGSLKSSPSM, VSTSSRNSAQ, and ENPSKSSPCS. 3 positions are modified to phosphoserine: Ser548, Ser555, and Ser561. A compositionally biased stretch (basic and acidic residues) spans 569-580; the sequence is AERKKQLVKAEA. The stretch at 595-629 forms a coiled coil; the sequence is EALSSEMSELGARLEEKRRAIEAQKRRIEAIFAKH. At Ser683 the chain carries Phosphoserine. Positions 696–727 form a coiled coil; sequence DYNRAVSKLSAALSSLQRDMQRLTDQQQRLLA. Positions 729–739 are enriched in pro residues; the sequence is PEAPGPAPPPA. The span at 740–768 shows a compositional bias: low complexity; it reads AWVIPGPATGPKAASPSPARRAPAARRSP. The residue at position 767 (Ser767) is a Phosphoserine. Residue Thr797 is modified to Phosphothreonine. A phosphoserine mark is found at Ser812 and Ser881. Positions 812-825 are enriched in polar residues; sequence SPSQVPVQTRSSIL. The segment covering 887–934 has biased composition (basic and acidic residues); the sequence is YKDEDKPEDEMAQKRASLLERQQRRVEEARRRKQWQEAEKEQKREEAA. A coiled-coil region spans residues 896-943; that stretch reads EMAQKRASLLERQQRRVEEARRRKQWQEAEKEQKREEAARLAQEAPGL. Ser1077 is modified (phosphoserine). One can recognise a CKK domain in the interval 1112-1246; that stretch reads GPRLYKEPSA…QSKKPTTPKK (135 aa).

It belongs to the CAMSAP1 family. Interacts with PLEKHA7. Interacts with CAMSAP2. Interacts with KATNA1 and KATNB1; leading to regulate the length of CAMSAP3-decorated microtubule stretches. Interacts with AKAP9; regulating Golgi assembly in epithelial cells. Interacts with MACF1. Interacts with isoform C of CDH23; leading to inhibit CAMSAP3 ability to induce microtubule bundle formation. Interacts with AKNA. In terms of tissue distribution, expressed at the apical surface of respiratory epithelia, as well as in the acini of submucosal glands (at protein level). In cochlea, restricted to the organ of Corti and increases during development (at protein level). Highly expressed in both sensory hair cells and supporting cells.

The protein resides in the cytoplasm. It localises to the cytoskeleton. It is found in the cell junction. The protein localises to the adherens junction. Its subcellular location is the cilium axoneme. The protein resides in the cilium basal body. Functionally, key microtubule-organizing protein that specifically binds the minus-end of non-centrosomal microtubules and regulates their dynamics and organization. Specifically recognizes growing microtubule minus-ends and autonomously decorates and stabilizes microtubule lattice formed by microtubule minus-end polymerization. Acts on free microtubule minus-ends that are not capped by microtubule-nucleating proteins or other factors and protects microtubule minus-ends from depolymerization. In addition, it also reduces the velocity of microtubule polymerization. Required for the biogenesis and the maintenance of zonula adherens by anchoring the minus-end of microtubules to zonula adherens and by recruiting the kinesin KIFC3 to those junctional sites. Required for orienting the apical-to-basal polarity of microtubules in epithelial cells: acts by tethering non-centrosomal microtubules to the apical cortex, leading to their longitudinal orientation. Plays a key role in early embryos, which lack centrosomes: accumulates at the microtubule bridges that connect pairs of cells and enables the formation of a non-centrosomal microtubule-organizing center that directs intracellular transport in the early embryo. Couples non-centrosomal microtubules with actin: interaction with MACF1 at the minus ends of non-centrosomal microtubules, tethers the microtubules to actin filaments, regulating focal adhesion size and cell migration. Plays a key role in the generation of non-centrosomal microtubules by accumulating in the pericentrosomal region and cooperating with KATNA1 to release non-centrosomal microtubules from the centrosome. Through the microtubule cytoskeleton, also regulates the organization of cellular organelles including the Golgi and the early endosomes. Through interaction with AKAP9, involved in translocation of Golgi vesicles in epithelial cells, where microtubules are mainly non-centrosomal. Plays an important role in motile cilia function by facilitatating proper orientation of basal bodies and formation of central microtubule pairs in motile cilia. In Mus musculus (Mouse), this protein is Calmodulin-regulated spectrin-associated protein 3.